The chain runs to 335 residues: Acetyl-coenzyme A carboxylase carboxyl transferase subunit alpha (335 aa).

Positions 48-308 (TLEKKVDALR…KGMLIEELKA (261 aa)) constitute a CoA carboxyltransferase C-terminal domain.

The protein belongs to the AccA family. Acetyl-CoA carboxylase is a heterohexamer composed of biotin carboxyl carrier protein (AccB), biotin carboxylase (AccC) and two subunits each of ACCase subunit alpha (AccA) and ACCase subunit beta (AccD).

It localises to the cytoplasm. It carries out the reaction N(6)-carboxybiotinyl-L-lysyl-[protein] + acetyl-CoA = N(6)-biotinyl-L-lysyl-[protein] + malonyl-CoA. It participates in lipid metabolism; malonyl-CoA biosynthesis; malonyl-CoA from acetyl-CoA: step 1/1. Component of the acetyl coenzyme A carboxylase (ACC) complex. First, biotin carboxylase catalyzes the carboxylation of biotin on its carrier protein (BCCP) and then the CO(2) group is transferred by the carboxyltransferase to acetyl-CoA to form malonyl-CoA. The polypeptide is Acetyl-coenzyme A carboxylase carboxyl transferase subunit alpha (Chlorobium luteolum (strain DSM 273 / BCRC 81028 / 2530) (Pelodictyon luteolum)).